Here is a 741-residue protein sequence, read N- to C-terminus: NUT family member 2G (741 aa).

Disordered regions lie at residues 172-200 (PGNA…PDDS), 293-375 (IQKS…PEEI), 391-424 (LGSH…SDPG), 496-624 (RAAP…LPGM), and 638-741 (RLSQ…HCSQ). Over residues 304 to 321 (SLPPPAPPRLEPRGPPAP) the composition is skewed to pro residues. The span at 402 to 412 (EGQREKGKVEQ) shows a compositional bias: basic and acidic residues. Residues 528-545 (QRVSVETSPPQTAAQDPQ) are compositionally biased toward polar residues. Low complexity predominate over residues 639-650 (LSQSPVPSSGLL). A compositionally biased stretch (basic residues) spans 731–741 (SRRKKKRHCSQ).

It belongs to the NUT family.

This is NUT family member 2G (NUTM2G) from Homo sapiens (Human).